The following is a 607-amino-acid chain: MDNLNDALEKLKLTGTECTSDKLDGCFDCLLQALGHNNTESSEKIQQSGILQLFASILNSQSSCASKVAHIVAEIAKNELMRIPCVEAGLIPPLVQLLHSKDQEVLLQTGRALGNICYDNHEGRRAVDQEGGAQIVVDHLRSMCTLTDPSSEKLMTVFCGMLMNYSSENDSLQTQLIQMGVIPILVDLLGVHSQNTALTEMCLVAFGNLAELESSKEQFAGTNIAEEIVKLFKKQTEHEKREIIFEVLAPLAENDAIKMQLVEAGLVECLLDVVQQTVNSEKDDDIAELKTSSDLMVLLLLGDESMQKLFEGGKGSVFQRVLSWLPSNNHQLQLAGALAIANFARNDGNCIHMVDSEIVQKLLDLLDRHVEDGNVTVQHAALSALRNLAIPVVNKAKMLSAGVAEEVLKFLRSEMPPVQFKLLGTLRMLIDAQAEAAEQIGKNEKLAERLVEWCEAKDHAGVMGESNRLLSALIRHSKSKDVIRTIVQSGGIKHLVTMATSEHVIMQNEALVALGLIAALELQAAEHDLESAKLVEVLHRLLLDERSAPEIKYNSMVLICAAMGSVPLHKEVQKLAFLDVVSKLRSHENKTVAQQASLTEQKLTVQS.

ARM repeat units follow at residues E79–Y118, D170–E211, D347–I390, P391–D431, and S479–A519.

As to quaternary structure, interacts with ralB. Probably interacts with the post-translationally isoprenylated (geranyl-geranylation) forms of ral proteins. Interacts with both GDP-bound and GTP-bound forms of ralA, but interaction is much stronger with ralA-GDP. In terms of tissue distribution, weakly expressed in adult tissues with highest levels found in spleen, kidney, skin and A6 cells.

The protein localises to the cytoplasm. The protein resides in the cytosol. Its subcellular location is the endoplasmic reticulum. It localises to the mitochondrion. Stimulates GDP/GTP exchange reaction of a group of small GTP-binding proteins (G proteins) including Rap1a/Rap1b, RhoA, RhoB and KRas, by stimulating the dissociation of GDP from and the subsequent binding of GTP to each small G protein. The chain is Rap1 GTPase-GDP dissociation stimulator 1-A (rap1gds1-a) from Xenopus laevis (African clawed frog).